Reading from the N-terminus, the 385-residue chain is FAD-dependent monooxygenase verC2 (385 aa).

Residues Arg-27, Asp-227, and Ala-240 each contribute to the FAD site. Asn-320 is a glycosylation site (N-linked (GlcNAc...) asparagine). A helical transmembrane segment spans residues Trp-365–Ile-385.

Belongs to the paxM FAD-dependent monooxygenase family. FAD serves as cofactor.

The protein localises to the membrane. The protein operates within secondary metabolite biosynthesis; terpenoid biosynthesis. It functions in the pathway mycotoxin biosynthesis. In terms of biological role, FAD-dependent monooxygenase; part of the gene cluster that mediates the biosynthesis of the neurotoxin verrucosidin, a methylated alpha-pyrone polyketide that inhibits oxidative phosphorylation in mitochondria and thereby causes neurological diseases. The carbon backbone of verrucosidin is synthesized by the HR-PKS verA, and further modified by the other verrucodidin cluster enzymes. This is FAD-dependent monooxygenase verC2 from Penicillium polonicum.